A 295-amino-acid polypeptide reads, in one-letter code: bZIP transcription factor RISBZ5 (295 aa).

The segment covering 16–26 (REEAGAGDRKP) has biased composition (basic and acidic residues). The tract at residues 16–157 (REEAGAGDRK…ARRSRRRKQA (142 aa)) is disordered. The segment covering 109-119 (SDSDSDCDSLL) has biased composition (acidic residues). Residues 120–136 (EAERSPRLRGTKSTETK) show a composition bias toward basic and acidic residues. The bZIP domain maps to 134–197 (ETKRIRRMVS…NTAVTDNRIL (64 aa)). Residues 136-155 (KRIRRMVSNRESARRSRRRK) are basic motif. The interval 162-176 (LESQVEQLKGENSSL) is leucine-zipper.

In terms of assembly, homodimer.

The protein resides in the nucleus. Probable transcription factor that binds to the DNA specific sequence 5'-TGAGTCA-3' found in seed storage protein gene promoters. May function as a negative regulator in cold and drought stress responses. This Oryza sativa subsp. japonica (Rice) protein is bZIP transcription factor RISBZ5.